The primary structure comprises 225 residues: Urease accessory protein UreG (225 aa).

A GTP-binding site is contributed by 25–32 (GPVGAGKT).

This sequence belongs to the SIMIBI class G3E GTPase family. UreG subfamily. As to quaternary structure, homodimer. UreD, UreF and UreG form a complex that acts as a GTP-hydrolysis-dependent molecular chaperone, activating the urease apoprotein by helping to assemble the nickel containing metallocenter of UreC. The UreE protein probably delivers the nickel.

It is found in the cytoplasm. Its function is as follows. Facilitates the functional incorporation of the urease nickel metallocenter. This process requires GTP hydrolysis, probably effectuated by UreG. The chain is Urease accessory protein UreG from Haemophilus influenzae (strain ATCC 51907 / DSM 11121 / KW20 / Rd).